Here is a 208-residue protein sequence, read N- to C-terminus: Na(+)-translocating NADH-quinone reductase subunit D (208 aa).

Helical transmembrane passes span 42–62 (IVMG…ISLV), 72–92 (IIVQ…LLQA), 103–123 (VFVG…AFAM), 131–151 (LIDG…VATV), and 178–198 (NGLF…IWGL).

Belongs to the NqrDE/RnfAE family. As to quaternary structure, composed of six subunits; NqrA, NqrB, NqrC, NqrD, NqrE and NqrF.

The protein localises to the cell inner membrane. It carries out the reaction a ubiquinone + n Na(+)(in) + NADH + H(+) = a ubiquinol + n Na(+)(out) + NAD(+). NQR complex catalyzes the reduction of ubiquinone-1 to ubiquinol by two successive reactions, coupled with the transport of Na(+) ions from the cytoplasm to the periplasm. NqrA to NqrE are probably involved in the second step, the conversion of ubisemiquinone to ubiquinol. The protein is Na(+)-translocating NADH-quinone reductase subunit D of Neisseria gonorrhoeae (strain ATCC 700825 / FA 1090).